Here is a 232-residue protein sequence, read N- to C-terminus: Flagellar L-ring protein (232 aa).

Positions 1 to 15 (MKKVLFYVLPFAFFG) are cleaved as a signal peptide. Residue Cys16 is the site of N-palmitoyl cysteine attachment. Residue Cys16 is the site of S-diacylglycerol cysteine attachment.

Belongs to the FlgH family. In terms of assembly, the basal body constitutes a major portion of the flagellar organelle and consists of four rings (L,P,S, and M) mounted on a central rod.

The protein localises to the cell outer membrane. The protein resides in the bacterial flagellum basal body. In terms of biological role, assembles around the rod to form the L-ring and probably protects the motor/basal body from shearing forces during rotation. This is Flagellar L-ring protein from Campylobacter jejuni subsp. doylei (strain ATCC BAA-1458 / RM4099 / 269.97).